We begin with the raw amino-acid sequence, 94 residues long: Integration host factor subunit beta (94 aa).

It belongs to the bacterial histone-like protein family. Heterodimer of an alpha and a beta chain.

Functionally, this protein is one of the two subunits of integration host factor, a specific DNA-binding protein that functions in genetic recombination as well as in transcriptional and translational control. This Citrobacter koseri (strain ATCC BAA-895 / CDC 4225-83 / SGSC4696) protein is Integration host factor subunit beta.